The following is a 788-amino-acid chain: MVNPVRKLIENPKRQLHKYEHLADLTEAHADEMAALSDKQLQAKTDEFKSRYKNGETLDQLLPEAFAAVREADKRVLGLYPFRVQIIGGAVLHGGNIAEMKTGEGKTLTATMPVYLNALPGDGVHVVTVNEYLTQYQAEEMGQVYKFMGLSIGVNLNEMPNDEKRAAFACDITYTTNSAIGFDYLRDNMAQTMEERVVRSLNYVLIDEADSILIDSARTPLIIGGSSDNVNMFYQRADRFVKTLDEGEDKDYTVDEEQKTAMLTNQGIHKAEIFFNIDNLYDDQNVALAHFIETALRANYSFFRDKDYVVRDGEVKLIDQFTGRISEGTRMSDGLHQAFEAKEGVEIQGEGTTLASITLQNFFRMYKKISGMTGTAKTEEEELKEIYNMEVVQVPTNEPVRRVDEPDVLYFNLRGKFNAVVDEIDRLYKKGQPVLVGTVSVDTSELLSQMLDKKGIQHNVLNAKNNAKEAEIVAQAGQRGAVTIATNMAGRGTDIKLGPGVADLGGLAVIGTERHESRRIDNQLRGRSGRQGDPGFSRFYLSLEDDLMVRFGADRIKQMMQRMNLDNDDSVVKNRMISRSIESAQKRVEGNNYDTRKQVLQYDDVMRQQREIIYDERTQIMKSTESLKSIFLPMVYRTIDRVVNAHTTGQQKDWDLLSIVDFVDNALDNSGEITVADLNGKSLNDIKVLLYDLANREFFAKQDALSDKEQMVNFEKTIMLRSIDQHWMQHIDDMDRLRQSVMIRSYGQYNPLIEYQTAAFSTYNKMIDDIEYDTTRLFMKAQVRQNLH.

Residues glutamine 85, 103–107 (GEGKT), and aspartate 494 contribute to the ATP site.

This sequence belongs to the SecA family. Monomer and homodimer. Part of the essential Sec protein translocation apparatus which comprises SecA, SecYEG and auxiliary proteins SecDF. Other proteins may also be involved.

Its subcellular location is the cell membrane. It is found in the cytoplasm. The enzyme catalyses ATP + H2O + cellular proteinSide 1 = ADP + phosphate + cellular proteinSide 2.. Part of the Sec protein translocase complex. Interacts with the SecYEG preprotein conducting channel. Has a central role in coupling the hydrolysis of ATP to the transfer of proteins into and across the cell membrane, serving as an ATP-driven molecular motor driving the stepwise translocation of polypeptide chains across the membrane. This Oenococcus oeni (strain ATCC BAA-331 / PSU-1) protein is Protein translocase subunit SecA.